The primary structure comprises 350 residues: MILPFSTQFTCPVQDNGFSPSSLLSHCKRDRFEVTSLRYDSFGSVKTASSSKWNVMRSRRNVKAFGLVDKLGKKVWRKKEEDSDSEDEEDEVKEETFGGKEASLDDPVERREWRKTIREVIDKHPDIEEDEEIDMVEKRRKMQKLLADYPLVVNEEDPNWPEDADGWGFSFNQFFNKITIKNEKKEEEDDDEDSEGDDSEKEIVWQDDNYIRPIKDLTTAEWEEAVFKDISPLMVLVHNRYKRPKENEKFREELEKAIQVIWNCGLPSPRCVAVDAVVETDLVSALKVSVFPEIIFTKAGKILYREKGIRTADELSKIMAFFYYGAAKPPCLNGVVNSQEQIPLVDVSVN.

A chloroplast-targeting transit peptide spans 1–48 (MILPFSTQFTCPVQDNGFSPSSLLSHCKRDRFEVTSLRYDSFGSVKTA). Disordered stretches follow at residues 78–107 (KKEEDSDSEDEEDEVKEETFGGKEASLDDP) and 182–201 (NEKKEEEDDDEDSEGDDSEK). Composition is skewed to acidic residues over residues 82–93 (DSDSEDEEDEVK) and 186–200 (EEEDDDEDSEGDDSE).

The protein resides in the plastid. It is found in the chloroplast stroma. Its subcellular location is the nucleus. Its function is as follows. Plays an essential role in early steps of chloroplast development. Involved in the regulation of plastid gene expression. Required for the proper function of the plastid transcriptional machinery and protein accumulation in thylakoid membranes. May function as molecular chaperone to ensure proper organization of the nucleoids in chloroplasts. Is a necessary component of phytochrome signaling for photosynthesis-associated plastid-encoded genes (PhAPGs) activation. Mediates the degradation of two repressors of chloroplast biogenesis, PIF1 and PIF3 in nucleus. Promotes the assembly of the plastid-encoded RNA polymerase (PEP) complex for PhAPG transcription in plastids. The chain is Thioredoxin-like fold domain-containing protein MRL7L, chloroplastic from Arabidopsis thaliana (Mouse-ear cress).